Consider the following 366-residue polypeptide: Ferrochelatase (366 aa).

Fe cation is bound by residues His-209 and Glu-290.

This sequence belongs to the ferrochelatase family.

Its subcellular location is the cytoplasm. It catalyses the reaction heme b + 2 H(+) = protoporphyrin IX + Fe(2+). It participates in porphyrin-containing compound metabolism; protoheme biosynthesis; protoheme from protoporphyrin-IX: step 1/1. Functionally, catalyzes the ferrous insertion into protoporphyrin IX. This is Ferrochelatase from Teredinibacter turnerae (strain ATCC 39867 / T7901).